The sequence spans 886 residues: Desmocollin-1 (886 aa).

The signal sequence occupies residues 1–29 (MAVACAAPGSTFSKQLLFFLLVLVLFCDA). Residues 30–134 (CQKVSLHVPS…KEPVHNRSKR (105 aa)) constitute a propeptide that is removed on maturation. Residues asparagine 130 and asparagine 165 are each glycosylated (N-linked (GlcNAc...) asparagine). Cadherin domains follow at residues 135 to 242 (RWAP…APYF), 243 to 354 (ETKL…SPYF), 355 to 471 (TQTS…GPEC), 472 to 575 (QPPV…DHPP), and 576 to 682 (QIDK…EERD). Residues 135–691 (RWAPIPCSLM…DAKPNIILGK (557 aa)) are Extracellular-facing. Threonine 385 bears the Phosphothreonine mark. Asparagine 546 is a glycosylation site (N-linked (GlcNAc...) (high mannose) asparagine). The N-linked (GlcNAc...) asparagine glycan is linked to asparagine 613. Residues 692-714 (WAILAMVLGSALLLCILFTCFCV) traverse the membrane as a helical segment. Over 715–886 (TTTKRTVKKC…RTLAKTCVKK (172 aa)) the chain is Cytoplasmic.

As to quaternary structure, binds to JUP/plakoglobin. In terms of tissue distribution, expressed in the epidermis and inner root sheaths of hair follicles (at protein level).

The protein localises to the cell membrane. Its subcellular location is the cell junction. It is found in the desmosome. In terms of biological role, a component of desmosome cell-cell junctions which are required for positive regulation of cellular adhesion. Required for desmosome adhesion strength between the granular layers of the epidermis, as a result moderates epidermal proliferation and differentiation. Is therefore required to maintain postnatal epidermal barrier function and normal hair follicle morphology into adulthood. The protein is Desmocollin-1 (Dsc1) of Mus musculus (Mouse).